A 447-amino-acid chain; its full sequence is MEMGNQHPSISRLQEIQKEVKSIEQQVLGFSGLSDDKNYKKLERILTKQLFEIDSVDTEGKGDIQQARKRAAQETERLLKELEQNANHPHRLEIQNIFQEAQALVKEKVVPFYNGGNCVTDEFEEGIQDVILRLTHVKTGGKVSLRKARYHTLTKICAVQEIIENCMKKQPSLPLSEDAHPSVAKINSVMCEVNKTRGTLIALLMGVNNKETCRHLSCVLSGLMADLDALDVCGHTEIRNYRKEVVEDINQLLRYLDLEEEADTTHAFDLGQNHSILKIEKVLKRMREIKTELLQAQNPPELYLSAKTELQGLIGQLDEVSLEKNPCIREARRRAVIEVQTLITYIDLKEALEKRKLLACEEHPSHKAVWDVLGNLSEIQGEVLSFDGNRTDKNYIRLEELLTKQLLALDAVDPQGEEKCKAARKQAVKLAQNILSYLDLKSDEWEY.

5 BAG domains span residues 9–86 (SISR…EQNA), 95–167 (QNIF…ENCM), 182–260 (SVAK…DLEE), 275–350 (SILK…DLKE), and 365–442 (SHKA…DLKS).

Binds to the ATPase domain of HSP/HSP70 chaperones. Binds PRKN. Interacts complex with HSPA8 and JPH2.

In terms of biological role, co-chaperone for HSP/HSP70 proteins. It functions as a nucleotide-exchange factor promoting the release of ADP from HSP70, thereby activating Hsp70-mediated protein refolding. Has an essential role in maintaining proteostasis at junctional membrane complexes (JMC), where it may function as a scaffold between the HSPA8 chaperone and JMC proteins enabling correct, HSPA8-dependent JMC protein folding. Inhibits both auto-ubiquitination of PRKN and ubiquitination of target proteins by PRKN. In Bos taurus (Bovine), this protein is BAG family molecular chaperone regulator 5 (BAG5).